Reading from the N-terminus, the 194-residue chain is Isopentenyl-diphosphate Delta-isomerase (194 aa).

Positions 27 and 34 each coordinate Mn(2+). The 135-residue stretch at 32 to 166 (ALHLAFSCHV…PWAFSPWLTL (135 aa)) folds into the Nudix hydrolase domain. Cys69 is an active-site residue. Residue His71 coordinates Mn(2+). Glu89 serves as a coordination point for Mg(2+). Glu116 and Glu118 together coordinate Mn(2+). Residue Glu118 is part of the active site.

Belongs to the IPP isomerase type 1 family. Mg(2+) is required as a cofactor. Mn(2+) serves as cofactor.

The protein localises to the cytoplasm. It carries out the reaction isopentenyl diphosphate = dimethylallyl diphosphate. Its pathway is isoprenoid biosynthesis; dimethylallyl diphosphate biosynthesis; dimethylallyl diphosphate from isopentenyl diphosphate: step 1/1. Catalyzes the 1,3-allylic rearrangement of the homoallylic substrate isopentenyl (IPP) to its highly electrophilic allylic isomer, dimethylallyl diphosphate (DMAPP). The polypeptide is Isopentenyl-diphosphate Delta-isomerase (Clavibacter michiganensis subsp. michiganensis (strain NCPPB 382)).